The sequence spans 846 residues: Iron-sulfur cluster assembly SufBD family protein Mb1496 (846 aa).

Positions 1–20 are disordered; the sequence is MTLTPEASKSVAQPPTQAPL. The DOD-type homing endonuclease domain maps to 388–528; that stretch reads LAGYYLAEGH…LQSILARLGH (141 aa).

This sequence belongs to the iron-sulfur cluster assembly SufBD family. In terms of processing, this protein undergoes a protein self splicing that involves a post-translational excision of the intervening region (intein) followed by peptide ligation.

This is Iron-sulfur cluster assembly SufBD family protein Mb1496 from Mycobacterium bovis (strain ATCC BAA-935 / AF2122/97).